A 302-amino-acid polypeptide reads, in one-letter code: Epoxyqueuosine reductase (302 aa).

Aspartate 128 (proton donor) is an active-site residue. The region spanning 170 to 202 is the 4Fe-4S ferredoxin-type 1 domain; the sequence is LPLQADGPIRDYCGTCTACIDACPTDAITPYEV. [4Fe-4S] cluster contacts are provided by cysteine 182, cysteine 185, cysteine 188, cysteine 192, cysteine 207, cysteine 234, cysteine 237, and cysteine 241. One can recognise a 4Fe-4S ferredoxin-type 2 domain in the interval 221–251; the sequence is NEFKGKMENWIFGCDICQDVCPWNSFARPHS.

Belongs to the QueG family. As to quaternary structure, monomer. Cob(II)alamin serves as cofactor. It depends on [4Fe-4S] cluster as a cofactor.

The protein resides in the cytoplasm. The catalysed reaction is epoxyqueuosine(34) in tRNA + AH2 = queuosine(34) in tRNA + A + H2O. The protein operates within tRNA modification; tRNA-queuosine biosynthesis. In terms of biological role, catalyzes the conversion of epoxyqueuosine (oQ) to queuosine (Q), which is a hypermodified base found in the wobble positions of tRNA(Asp), tRNA(Asn), tRNA(His) and tRNA(Tyr). The polypeptide is Epoxyqueuosine reductase (Leadbetterella byssophila (strain DSM 17132 / JCM 16389 / KACC 11308 / NBRC 106382 / 4M15)).